A 462-amino-acid polypeptide reads, in one-letter code: Argininosuccinate lyase (462 aa).

Belongs to the lyase 1 family. Argininosuccinate lyase subfamily.

It is found in the cytoplasm. The catalysed reaction is 2-(N(omega)-L-arginino)succinate = fumarate + L-arginine. The protein operates within amino-acid biosynthesis; L-arginine biosynthesis; L-arginine from L-ornithine and carbamoyl phosphate: step 3/3. The chain is Argininosuccinate lyase from Bacillus anthracis (strain A0248).